Here is a 415-residue protein sequence, read N- to C-terminus: Leucine-rich repeat-containing protein 34 (415 aa).

LRR repeat units lie at residues 246–272 and 274–296; these read TLRYLDVSCNKITRDGMVFLADVLKSN and TLEVLDLSFNRIENAGAKYLSET.

As to quaternary structure, interacts with NPM1 and NCL.

It localises to the nucleus. The protein resides in the nucleolus. It is found in the cytoplasm. Highly expressed in stem cells where it may be involved in regulation of pluripotency. In embryonic stem cells (ESCs), important for normal expression of the pluripotency regulators POU5F1/OCT4 and KLF4. Also important for expression of the ectodermal marker gene NES and the endodermal marker gene GATA4. Promotes stem cell proliferation in vitro. The polypeptide is Leucine-rich repeat-containing protein 34 (Lrrc34) (Rattus norvegicus (Rat)).